Here is a 785-residue protein sequence, read N- to C-terminus: uncharacterized protein (785 aa).

The region spanning 1 to 93 is the PE domain; that stretch reads MSWVMVSPEL…GGAYAAAEAA (93 aa).

Belongs to the mycobacterial PE family. PGRS subfamily.

This is an uncharacterized protein from Mycobacterium tuberculosis (strain CDC 1551 / Oshkosh).